A 242-amino-acid chain; its full sequence is uncharacterized protein (242 aa).

It localises to the cytoplasm. The protein resides in the nucleus. This is an uncharacterized protein from Schizosaccharomyces pombe (strain 972 / ATCC 24843) (Fission yeast).